The following is a 460-amino-acid chain: Serine/threonine-protein kinase cds1 (460 aa).

The 57-residue stretch at 60–116 folds into the FHA domain; sequence WRFGRHKSCEVVLNGPRVSNFHFEIYQGHRNDSDESENVVFLHDHSSNGTFLNFERL. Residues 167-433 enclose the Protein kinase domain; the sequence is YEIIRTLGSG…ESEALQHPWF (267 aa). Residues 173–181 and Lys196 contribute to the ATP site; that span reads LGSGTFAVV. Asp294 serves as the catalytic Proton acceptor. A compositionally biased stretch (basic and acidic residues) spans 438–453; sequence THEHRTPPSSSEHEAT. A disordered region spans residues 438-460; that stretch reads THEHRTPPSSSEHEATEQLNSSS. The residue at position 443 (Thr443) is a Phosphothreonine.

It belongs to the protein kinase superfamily. CAMK Ser/Thr protein kinase family. CHEK2 subfamily. As to quaternary structure, interacts with rad26. In terms of processing, autophosphorylated.

The catalysed reaction is L-seryl-[protein] + ATP = O-phospho-L-seryl-[protein] + ADP + H(+). The enzyme catalyses L-threonyl-[protein] + ATP = O-phospho-L-threonyl-[protein] + ADP + H(+). Has a role in the DNA replication-monitoring S/G2 checkpoint system. It is responsible for blocking mitosis in the S phase. It monitors DNA synthesis by interacting with DNA polymerase alpha and sends a signal to block the onset of mitosis while DNA synthesis is in progress. Phosphorylates rad60 and dna2. The sequence is that of Serine/threonine-protein kinase cds1 (cds1) from Schizosaccharomyces pombe (strain 972 / ATCC 24843) (Fission yeast).